Reading from the N-terminus, the 2620-residue chain is Highly reducing polyketide synthase tazB (2620 aa).

Residues 1 to 22 are disordered; that stretch reads MPFLNGNTTHHEAHSAEPDHGN. The Ketosynthase family 3 (KS3) domain occupies 1–416; the sequence is MPFLNGNTTH…GTNAHCILDD (416 aa). Over residues 9 to 22 the composition is skewed to basic and acidic residues; it reads THHEAHSAEPDHGN. Catalysis depends on for beta-ketoacyl synthase activity residues C166, H301, and H340. Residues 460-481 form a disordered region; that stretch reads GFNKFDEPRGSDSAGSNANGSH. Positions 470–481 are enriched in low complexity; that stretch reads SDSAGSNANGSH. Residues 601–923 form a malonyl-CoA:ACP transacylase (MAT) domain region; the sequence is VFTGQGAQYA…PYLATLSRKD (323 aa). An N-terminal hotdog fold region spans residues 993–1128; it reads HDLFGAPVPD…GEVSPDLKKS (136 aa). Residues 993-1313 are dehydratase (DH) domain; the sequence is HDLFGAPVPD…LAGIRLSPFK (321 aa). Residues 993 to 1318 form the PKS/mFAS DH domain; the sequence is HDLFGAPVPD…LSPFKPESSE (326 aa). Catalysis depends on H1025, which acts as the Proton acceptor; for dehydratase activity. A C-terminal hotdog fold region spans residues 1157 to 1318; it reads TAPVDFTPVY…LSPFKPESSE (162 aa). The active-site Proton donor; for dehydratase activity is the D1225. The tract at residues 1379 to 1680 is methyltransferase (CMet) domain; it reads GLRESREMKD…VDFEASSSIY (302 aa). The interval 1910–2227 is enoyl reductase (ER) domain; sequence GIDSLTWVTD…TGKSIGKVTL (318 aa). Positions 2251 to 2425 are ketoreductase (KR) domain; that stretch reads SFILAGGLGG…HGASVNLGAV (175 aa). A Carrier domain is found at 2539–2620; the sequence is EAARIIHKAL…VSLSSFTKFR (82 aa). S2576 is subject to O-(pantetheine 4'-phosphoryl)serine.

It participates in secondary metabolite biosynthesis. Highly reducing polyketide synthase; part of the gene cluster that mediates the biosynthesis of azaterrilone A and other azaphilones, a class of fungal metabolites characterized by a highly oxygenated pyrano-quinone bicyclic core and exhibiting a broad range of bioactivities. The first step of the pathway begins with the non-reducing polyketide synthase tazA that assembles one acetyl-CoA starter unit, five malonyl-CoA units, and catalyzes a series of Claisen condensations, methylation, PT-mediated cyclization, and finally releases the first hexaketide precursor through the R-domain. The tazA product then undergoes reduction on its terminal ketone and the following pyran-ring formation by yet undetermined enzyme(s). Dehydration and enoyl reduction, possibly involving the trans-enoyl reductase tazE leads to the next intermediate. TazD is predicted as an acetyltransferase and might catalyze the acetylation steps leading to the synthesis of azaterrilone A. Azaterrilone A is not the final product of the taz pathway and both the highly reducing polyketide synthase tazB and the dual enzyme tazHJ catalyze late steps of the pathway, leading to the production of the 2 final stereoisomers that contain additional polyketide modification whose structures have still to be determined. The protein is Highly reducing polyketide synthase tazB of Aspergillus terreus (strain NIH 2624 / FGSC A1156).